Here is a 416-residue protein sequence, read N- to C-terminus: Serine hydroxymethyltransferase 1 (416 aa).

Residues Leu-121 and 125–127 (GHL) each bind (6S)-5,6,7,8-tetrahydrofolate. An N6-(pyridoxal phosphate)lysine modification is found at Lys-229. Residues Glu-245 and 354 to 356 (SPF) each bind (6S)-5,6,7,8-tetrahydrofolate.

The protein belongs to the SHMT family. In terms of assembly, homodimer. Pyridoxal 5'-phosphate is required as a cofactor.

Its subcellular location is the cytoplasm. The enzyme catalyses (6R)-5,10-methylene-5,6,7,8-tetrahydrofolate + glycine + H2O = (6S)-5,6,7,8-tetrahydrofolate + L-serine. The protein operates within one-carbon metabolism; tetrahydrofolate interconversion. It functions in the pathway amino-acid biosynthesis; glycine biosynthesis; glycine from L-serine: step 1/1. Catalyzes the reversible interconversion of serine and glycine with tetrahydrofolate (THF) serving as the one-carbon carrier. This reaction serves as the major source of one-carbon groups required for the biosynthesis of purines, thymidylate, methionine, and other important biomolecules. Also exhibits THF-independent aldolase activity toward beta-hydroxyamino acids, producing glycine and aldehydes, via a retro-aldol mechanism. This Vibrio vulnificus (strain CMCP6) protein is Serine hydroxymethyltransferase 1.